Reading from the N-terminus, the 772-residue chain is E3 ubiquitin-protein ligase UHRF1 (772 aa).

In terms of domain architecture, Ubiquitin-like spans 1-77; it reads MWIQVRTMDG…IVQLLVRQIP (77 aa). The tract at residues 90–111 is disordered; it reads SDASAGCGSGQRDSDSGSGEGA. Tudor-like stretches follow at residues 129-205 and 212-281; these read SLYK…LRAR and EIKV…IEEP. Residues 291–299 form a linker region; sequence PQKRQNGPE. The PHD-type zinc-finger motif lies at 297–364; sequence GPECKHCKDN…DWYCPDCRND (68 aa). Histone H3R2me0 binding regions lie at residues 331-335 and 351-353; these read CDECD and PQD. The YDG domain maps to 417-580; it reads GPIPGVPVGT…FLVWRYLLRR (164 aa). Residues 443–444 form a required to promote base flipping region; that stretch reads HV. DNA is bound by residues 461–462 and D467; that span reads AG. 2 required for formation of a 5-methylcytosine-binding pocket regions span residues 464–467 and 476–479; these read YEDD and YTGS. The segment covering 615–626 has biased composition (basic and acidic residues); sequence SKEREKENKTED. The segment at 615–649 is disordered; that stretch reads SKEREKENKTEDEPIDSPSKGKRKRNSDNEQTAAK. The segment at 703–742 adopts an RING-type zinc-finger fold; it reads CICCQEVVYEPVTTECHHNICKGCLDRSFKALVHSCPACR.

The protein resides in the nucleus. The catalysed reaction is S-ubiquitinyl-[E2 ubiquitin-conjugating enzyme]-L-cysteine + [acceptor protein]-L-lysine = [E2 ubiquitin-conjugating enzyme]-L-cysteine + N(6)-ubiquitinyl-[acceptor protein]-L-lysine.. It functions in the pathway protein modification; protein ubiquitination. Multidomain protein that acts as a key epigenetic regulator by bridging DNA methylation and chromatin modification. Specifically recognizes and binds hemimethylated DNA at replication forks via its YDG domain and recruits dnmt1 methyltransferase to ensure faithful propagation of the DNA methylation patterns through DNA replication. In addition to its role in maintenance of DNA methylation, also plays a key role in chromatin modification: through its tudor-like regions and PHD-type zinc fingers, specifically recognizes and binds histone H3 trimethylated at 'Lys-9' (H3K9me3) and unmethylated at 'Arg-2' (H3R2me0), respectively, and recruits chromatin proteins. Enriched in pericentric heterochromatin where it recruits different chromatin modifiers required for this chromatin replication. Also localizes to euchromatic regions where it negatively regulates transcription possibly by impacting DNA methylation and histone modifications. Has E3 ubiquitin-protein ligase activity by mediating the ubiquitination of target proteins. However, it is still unclear how E3 ubiquitin-protein ligase activity is related to its role in chromatin in vivo. The sequence is that of E3 ubiquitin-protein ligase UHRF1 (uhrf1) from Xenopus laevis (African clawed frog).